The following is a 105-amino-acid chain: Flexible cuticle protein 12 (105 aa).

The first 16 residues, 1 to 16 (MKSFVVVALLVAVAAA), serve as a signal peptide directing secretion. The 69-residue stretch at 37-105 (VEGFQYGYET…KPVGAHIPVA (69 aa)) folds into the Chitin-binding type R&amp;R domain.

The protein is Flexible cuticle protein 12 (CP12) of Hyalophora cecropia (Cecropia moth).